The primary structure comprises 34 residues: Delta-conotoxin AtVIA (34 aa).

Positions 1–4 (LSKK) are excised as a propeptide. Q5 carries the pyrrolidone carboxylic acid modification. 3 disulfide bridges follow: C6/C23, C13/C27, and C22/C31.

In terms of tissue distribution, expressed by the venom duct.

Its subcellular location is the secreted. Probable toxin from a worm-hunter cone snail. Shows an excitatory activity on a majority of mouse lumbar dorsal root ganglion (DRG) neurons. Very probably inhibits the inactivation of voltage-gated sodium channels (Nav). The polypeptide is Delta-conotoxin AtVIA (Conus ateralbus (Cone snail)).